The primary structure comprises 1349 residues: DNA-directed RNA polymerase subunit beta' (1349 aa).

4 residues coordinate Zn(2+): cysteine 70, cysteine 72, cysteine 85, and cysteine 88. Mg(2+)-binding residues include aspartate 460, aspartate 462, and aspartate 464. 4 residues coordinate Zn(2+): cysteine 801, cysteine 875, cysteine 882, and cysteine 885.

It belongs to the RNA polymerase beta' chain family. In terms of assembly, the RNAP catalytic core consists of 2 alpha, 1 beta, 1 beta' and 1 omega subunit. When a sigma factor is associated with the core the holoenzyme is formed, which can initiate transcription. Mg(2+) serves as cofactor. Requires Zn(2+) as cofactor.

It catalyses the reaction RNA(n) + a ribonucleoside 5'-triphosphate = RNA(n+1) + diphosphate. In terms of biological role, DNA-dependent RNA polymerase catalyzes the transcription of DNA into RNA using the four ribonucleoside triphosphates as substrates. This chain is DNA-directed RNA polymerase subunit beta', found in Desulfotalea psychrophila (strain LSv54 / DSM 12343).